Consider the following 203-residue polypeptide: Adenosylcobalamin/alpha-ribazole phosphatase (203 aa).

The Tele-phosphohistidine intermediate role is filled by histidine 8. Glutamate 81 functions as the Proton donor/acceptor in the catalytic mechanism.

Belongs to the phosphoglycerate mutase family.

The enzyme catalyses adenosylcob(III)alamin 5'-phosphate + H2O = adenosylcob(III)alamin + phosphate. It carries out the reaction alpha-ribazole 5'-phosphate + H2O = alpha-ribazole + phosphate. It functions in the pathway nucleoside biosynthesis; alpha-ribazole biosynthesis; alpha-ribazole from 5,6-dimethylbenzimidazole: step 2/2. Catalyzes the conversion of adenosylcobalamin 5'-phosphate to adenosylcobalamin (vitamin B12); involved in the assembly of the nucleotide loop of cobalamin. Also catalyzes the hydrolysis of the phospho group from alpha-ribazole 5'-phosphate to form alpha-ribazole. The chain is Adenosylcobalamin/alpha-ribazole phosphatase (cobC) from Escherichia coli (strain K12).